A 207-amino-acid chain; its full sequence is Large ribosomal subunit protein uL4 (207 aa).

Residues 49-78 form a disordered region; it reads HAVKNRSAVSGGGRKPWRQKGTGRARQGSI.

It belongs to the universal ribosomal protein uL4 family. Part of the 50S ribosomal subunit.

In terms of biological role, one of the primary rRNA binding proteins, this protein initially binds near the 5'-end of the 23S rRNA. It is important during the early stages of 50S assembly. It makes multiple contacts with different domains of the 23S rRNA in the assembled 50S subunit and ribosome. Its function is as follows. Forms part of the polypeptide exit tunnel. The protein is Large ribosomal subunit protein uL4 of Streptococcus agalactiae serotype Ia (strain ATCC 27591 / A909 / CDC SS700).